Consider the following 348-residue polypeptide: Ileal sodium/bile acid cotransporter (348 aa).

Over 1–28 the chain is Extracellular; that stretch reads MDNSSVCPPNATVCEGDSCVVPESNFNA. N3 and N10 each carry an N-linked (GlcNAc...) asparagine glycan. Residues 29-49 form a helical membrane-spanning segment; it reads ILNTVMSTVLTILLAMVMFSM. Topologically, residues 50-87 are cytoplasmic; sequence GCNVEVHKFLGHIKRPWGIFVGFLCQFGIMPLTGFILS. A helical transmembrane segment spans residues 88-108; the sequence is VASGILPVQAVVVLIMGCCPG. The Extracellular portion of the chain corresponds to 109–126; sequence GTGSNILAYWIDGDMDLS. A helical membrane pass occupies residues 127–147; it reads VSMTTCSTLLALGMMPLCLFV. Over 148-157 the chain is Cytoplasmic; sequence YTKMWVDSGT. A helical membrane pass occupies residues 158-178; the sequence is IVIPYDSIGISLVALVIPVSF. Over 179–195 the chain is Extracellular; the sequence is GMFVNHKWPQKAKIILK. A helical transmembrane segment spans residues 196 to 216; that stretch reads IGSITGVILIVLIAVIGGILY. Residues 217-224 lie on the Cytoplasmic side of the membrane; it reads QSAWIIEP. A helical transmembrane segment spans residues 225-245; sequence KLWIIGTIFPIAGYSLGFFLA. The Extracellular portion of the chain corresponds to 246–284; that stretch reads RLAGQPWYRCRTVALETGMQNTQLCSTIVQLSFSPEDLN. The chain crosses the membrane as a helical span at residues 285–305; that stretch reads LVFTFPLIYTVFQLVFAAVIL. Topologically, residues 306-348 are cytoplasmic; that stretch reads GIYVTYRKCYGKNDAEFLEKTDNEMDSRPSFDETNKGFQPDEK. A disordered region spans residues 328 to 348; sequence NEMDSRPSFDETNKGFQPDEK. Residue S335 is modified to Phosphoserine.

It belongs to the bile acid:sodium symporter (BASS) (TC 2.A.28) family. Monomer and homodimer. As to expression, expressed in ileum.

The protein resides in the membrane. The enzyme catalyses taurocholate(out) + 2 Na(+)(out) = taurocholate(in) + 2 Na(+)(in). It carries out the reaction cholate(out) + 2 Na(+)(out) = cholate(in) + 2 Na(+)(in). It catalyses the reaction taurochenodeoxycholate(out) + 2 Na(+)(out) = taurochenodeoxycholate(in) + 2 Na(+)(in). The catalysed reaction is tauroursodeoxycholate(out) + 2 Na(+)(out) = tauroursodeoxycholate(in) + 2 Na(+)(in). The enzyme catalyses glycocholate(out) + 2 Na(+)(out) = glycocholate(in) + 2 Na(+)(in). It carries out the reaction tauronorcholate(out) + 2 Na(+)(out) = tauronorcholate(in) + 2 Na(+)(in). It catalyses the reaction tauroallocholate(out) + 2 Na(+)(out) = tauroallocholate(in) + 2 Na(+)(in). The catalysed reaction is taurodeoxycholate(out) + 2 Na(+)(out) = taurodeoxycholate(in) + 2 Na(+)(in). The enzyme catalyses tauro-beta-muricholate(out) + 2 Na(+)(out) = tauro-beta-muricholate(in) + 2 Na(+)(in). Functionally, plays a critical role in the sodium-dependent reabsorption of bile acids from the lumen of the small intestine. Transports various bile acids, unconjugated or conjugated, such as cholate and taurocholate. Also responsible for bile acid transport in the renal proximal tubules, a salvage mechanism that helps conserve bile acids. Works collaboratively with the Na(+)-taurocholate cotransporting polypeptide (NTCP), the organic solute transporter (OST), and the bile salt export pump (BSEP), to ensure efficacious biological recycling of bile acids during enterohepatic circulation. This Mus musculus (Mouse) protein is Ileal sodium/bile acid cotransporter (Slc10a2).